A 384-amino-acid polypeptide reads, in one-letter code: Lipid-A-disaccharide synthase 1 (384 aa).

It belongs to the LpxB family.

The catalysed reaction is a lipid X + a UDP-2-N,3-O-bis[(3R)-3-hydroxyacyl]-alpha-D-glucosamine = a lipid A disaccharide + UDP + H(+). The protein operates within bacterial outer membrane biogenesis; LPS lipid A biosynthesis. In terms of biological role, condensation of UDP-2,3-diacylglucosamine and 2,3-diacylglucosamine-1-phosphate to form lipid A disaccharide, a precursor of lipid A, a phosphorylated glycolipid that anchors the lipopolysaccharide to the outer membrane of the cell. The protein is Lipid-A-disaccharide synthase 1 of Legionella pneumophila (strain Lens).